We begin with the raw amino-acid sequence, 99 residues long: CLAVATA3/ESR (CLE)-related protein 11 (99 aa).

Positions 1–31 (MTKQPKPCSFLFHISLLSALFVFLLISFAFT) are cleaved as a signal peptide. Hydroxyproline is present on residues Pro-91 and Pro-94. A glycan (O-linked (Ara...) hydroxyproline) is linked at Pro-94.

Belongs to the CLV3/ESR signal peptide family. The O-glycosylation (arabinosylation) of the hydroxyproline Pro-94 enhances binding affinity of the CLE11p peptide for its receptor. In terms of tissue distribution, mostly expressed in seedlings, roots and siliques, and, to a lower extent, in leaves, flowers, stems and apex.

It localises to the secreted. The protein resides in the extracellular space. Its function is as follows. Extracellular signal peptide that regulates cell fate. Represses root apical meristem maintenance. Regulates the transition of protophloem cells from proliferation to differentiation, thus impinging on postembryonic growth capacity of the root meristem; this signaling pathway requires CRN and CLV2. This chain is CLAVATA3/ESR (CLE)-related protein 11, found in Arabidopsis thaliana (Mouse-ear cress).